An 892-amino-acid polypeptide reads, in one-letter code: Dystroglycan 1 (892 aa).

Positions 1-27 (MRMSAGLSLLLPLWGRTFLLLLSVAMA) are cleaved as a signal peptide. Topologically, residues 28-750 (QSHWPSEAGR…SSEDDVYLHT (723 aa)) are extracellular. Residues 30–405 (HWPSEAGRDW…GQIRPTMTIP (376 aa)) are required for laminin recognition. An O-glycosylated at one site region spans residues 46–68 (SMHSVLSDLHEAVPTVVGIPDGI). N138 carries an N-linked (GlcNAc...) asparagine glycan. A disulfide bond links C179 and C261. The segment at 313–482 (ATPTPVTAIG…PPTRIRTTTS (170 aa)) is mucin-like domain. 3 O-linked (Man6P...) threonine glycosylation sites follow: T314, T316, and T376. Positions 378 to 497 (TLGPIQPTRV…GEPNQRPELK (120 aa)) are disordered. The segment covering 410 to 444 (PTAVATPPTTTTKKPRVSTPKPATPSTDSSTTTTR) has biased composition (low complexity). The interval 460–482 (TTKAPITRLETASPPTRIRTTTS) is O-glycosylated at seven sites with GalNAc. Positions 600–709 (RAPARFKAKF…SSIAVTGSGS (110 aa)) constitute a Peptidase S72 domain. N-linked (GlcNAc...) asparagine glycosylation is found at N638, N646, and N658. C666 and C710 are disulfide-bonded. Residues 721 to 742 (PRRVPSEVPSTDVPDRDPEKSS) form a disordered region. The span at 733 to 742 (VPDRDPEKSS) shows a compositional bias: basic and acidic residues. The chain crosses the membrane as a helical span at residues 751–771 (VIPAVVVAAILLIAGIIAMIC). The Cytoplasmic portion of the chain corresponds to 772–892 (YRKKRKGKLT…YRSPPPYVPP (121 aa)). The Nuclear localization signal motif lies at 773-779 (RKKRKGK). T787 is modified (phosphothreonine). A required for interaction with CAV3 region spans residues 816 to 892 (LQEEKAPLPP…YRSPPPYVPP (77 aa)). Residues 820-892 (KAPLPPPEYP…YRSPPPYVPP (73 aa)) form a disordered region. The span at 829-843 (PNQSVPETTPLNQDT) shows a compositional bias: polar residues. Positions 856-867 (NAPPYQPPPPFT) are enriched in pro residues. Positions 877-892 (PKNMTPYRSPPPYVPP) are required for binding DMD and UTRN. The PPXY motif signature appears at 886–889 (PPPY). Residue Y889 is modified to Phosphotyrosine; by SRC.

In terms of assembly, monomer. Heterodimer of alpha- and beta-dystroglycan subunits which are the central components of the dystrophin-glycoprotein complex. This complex then can form a dystrophin-associated glycoprotein complex (DGC) which is composed of three subcomplexes: a cytoplasmic complex comprised of DMD (or UTRN), DTNA and a number of syntrophins, such as SNTB1, SNTB2, SNTG1 and SNTG2, the transmembrane dystroglycan complex, and the sarcoglycan-sarcospan complex. Interacts (via the N-terminal of alphaDAG1) with LARGE1; the interaction enhances laminin binding. Interacts with SGCD. Interacts with AGR2 and AGR3. Interacts (betaDAG1) with DMD; the interaction is inhibited by phosphorylation on the PPXY motif. Interacts (betaDAG1, via its PPXY motif) with UTRN (via its WWW and ZZ domains); the interaction is inhibited by phosphorylation on the PPXY motif. Interacts (betaDAG1, via its phosphorylated PPXY motif) with the SH2 domain-containing proteins, FYN, CSK, NCK and SHC. Interacts (betaDAG1) with CAV3 (via a central WW-like domain); the interaction disrupts the binding of DMD. BetaDAG1 directly interacts with ANK3, but not with ANK2; this interaction does not interfere with DMD-binding and is required for retention at costameres. Identified in a dystroglycan complex that contains at least PRX, DRP2, UTRN, DMD and DAG1. Interacts with POMGNT1. BetaDAG1 interacts with CD93. In terms of processing, O-glycosylated. POMGNT1 catalyzes the initial addition of N-acetylglucosamine, giving rise to the GlcNAc(beta1-2)Man(alpha1-)O-Ser/Thr moiety and thus providing the necessary basis for the addition of further carbohydrate moieties. Heavily O-glycosylated comprising of up to two thirds of its mass and the carbohydrate composition differs depending on tissue type. Mucin-type O-glycosylation is important for ligand binding activity. O-mannosylation is found in high abundance in both brain and muscle where the most abundant glycan is Sia-alpha-2-3-Gal-beta-1-4-Glc-NAc-beta-1-2-Man. In muscle, glycosylation on Thr-314, Thr-316 and Thr-376 by a phosphorylated O-mannosyl glycan with the structure 2-(N-acetylamido)-2-deoxygalactosyl-beta-1,3-2-(N-acetylamido)-2-deoxyglucosyl-beta-1,4-6-phosphomannose is mediated by like-acetylglucosaminyltransferase (LARGE1) protein amd is required for laminin binding. O-glycosylated in the N-terminal region with a core 1 or possibly core 8 glycan. The brain form displays a unique glycosylation pattern which is absent in other tissues; this form shows enhanced binding to laminin LAMA5 compared to the skeletal muscle form. N-glycosylated. Post-translationally, autolytic cleavage produces the alpha and beta subunits. In cutaneous cells, as well as in certain pathological conditions, shedding of beta-dystroglycan can occur releasing a peptide of about 30 kDa. In terms of processing, SRC-mediated phosphorylation of the PPXY motif of the beta subunit recruits SH2 domain-containing proteins, but inhibits binding to WWW domain-containing proteins, DMD and UTRN. This phosphorylation also inhibits nuclear entry.

Its subcellular location is the secreted. It localises to the extracellular space. The protein localises to the cell membrane. The protein resides in the cytoplasm. It is found in the cytoskeleton. Its subcellular location is the nucleus. It localises to the nucleoplasm. The protein localises to the sarcolemma. The protein resides in the postsynaptic cell membrane. The dystroglycan complex is involved in a number of processes including laminin and basement membrane assembly, sarcolemmal stability, cell survival, peripheral nerve myelination, nodal structure, cell migration, and epithelial polarization. In terms of biological role, extracellular peripheral glycoprotein that acts as a receptor for extracellular matrix proteins containing laminin-G domains. Receptor for laminin-2 (LAMA2) and agrin in peripheral nerve Schwann cells. Also acts as a receptor for laminin LAMA5. Its function is as follows. Transmembrane protein that plays important roles in connecting the extracellular matrix to the cytoskeleton. Acts as a cell adhesion receptor in both muscle and non-muscle tissues. Receptor for both DMD and UTRN and, through these interactions, scaffolds axin to the cytoskeleton. Also functions in cell adhesion-mediated signaling and implicated in cell polarity. The polypeptide is Dystroglycan 1 (Canis lupus familiaris (Dog)).